The chain runs to 385 residues: Spermidine/putrescine import ATP-binding protein PotA (385 aa).

An ABC transporter domain is found at 6–238; that stretch reads IEFKNVSKVF…PINHFVATFI (233 aa). An ATP-binding site is contributed by 40–47; it reads GASGSGKS.

Belongs to the ABC transporter superfamily. Spermidine/putrescine importer (TC 3.A.1.11.1) family. As to quaternary structure, the complex is composed of two ATP-binding proteins (PotA), two transmembrane proteins (PotB and PotC) and a solute-binding protein (PotD).

Its subcellular location is the cell membrane. It carries out the reaction ATP + H2O + polyamine-[polyamine-binding protein]Side 1 = ADP + phosphate + polyamineSide 2 + [polyamine-binding protein]Side 1.. Part of the ABC transporter complex PotABCD involved in spermidine/putrescine import. Responsible for energy coupling to the transport system. This chain is Spermidine/putrescine import ATP-binding protein PotA, found in Streptococcus pneumoniae serotype 4 (strain ATCC BAA-334 / TIGR4).